Consider the following 121-residue polypeptide: Acid shock protein (121 aa).

Positions 1–21 are cleaved as a signal peptide; that stretch reads MKKVLALMVAATLGLSSVAFA. Residues 22–63 constitute a propeptide that is removed on maturation; it reads ADTTATATPAATSTTATVAAQTKATQHQKHKVTKKTTEQKAQ. Positions 40 to 121 are disordered; that stretch reads AAQTKATQHQ…AKKPVAAPAA (82 aa). Positions 84–93 are enriched in basic residues; that stretch reads AAKKHVKKAS. Residues 94-103 are compositionally biased toward low complexity; sequence VQKAPVQKAQ. Basic residues predominate over residues 104–113; sequence AAKKHHKTAK.

It belongs to the Asr family. Post-translationally, proteolytic processing gives rise to the active protein.

It localises to the periplasm. Functionally, required for growth and/or survival at acidic conditions. This is Acid shock protein from Yersinia pestis bv. Antiqua (strain Antiqua).